Here is a 1065-residue protein sequence, read N- to C-terminus: Alpha-L-arabinofuranosidase (1065 aa).

The first 26 residues, 1 to 26 (MKHWKKMAASLIAISTMVAVVPTTYA), serve as a signal peptide directing secretion. One can recognise a BIG2 domain in the interval 277–346 (VVNNKLTLIE…TTELGGVKAE (70 aa)). Residues 997–1031 (KAPTNPGEGDGDKGDGNKPTTPTTGDKTNVNKPGS) are disordered. A compositionally biased stretch (polar residues) spans 1014–1031 (KPTTPTTGDKTNVNKPGS). The chain crosses the membrane as a helical span at residues 1040-1060 (VLGLGGAVVALAIAGISLTLW).

This sequence belongs to the glycosyl hydrolase 43 family.

It is found in the cell membrane. The catalysed reaction is Hydrolysis of terminal non-reducing alpha-L-arabinofuranoside residues in alpha-L-arabinosides.. In terms of biological role, involved in the type II arabinogalactan (AG) side chains degradation. Releases arabinofuranose (Araf) from alpha-1,3-Araf-substituted beta-1,6-galactooligosaccharides. Can use radish root AGP, larch AG and arabinan. Shows weaker activity with gum arabic and arabinoxylan. The polypeptide is Alpha-L-arabinofuranosidase (Bifidobacterium longum subsp. longum (strain ATCC 15707 / DSM 20219 / JCM 1217 / NCTC 11818 / E194b)).